Here is a 426-residue protein sequence, read N- to C-terminus: Serine--tRNA ligase (426 aa).

Residue threonine 227–glutamate 229 participates in L-serine binding. Residues arginine 258–glutamate 260 and valine 274 contribute to the ATP site. Glutamate 281 provides a ligand contact to L-serine. Residue glutamate 345–serine 348 coordinates ATP. Threonine 380 contributes to the L-serine binding site.

The protein belongs to the class-II aminoacyl-tRNA synthetase family. Type-1 seryl-tRNA synthetase subfamily. Homodimer. The tRNA molecule binds across the dimer.

Its subcellular location is the cytoplasm. It catalyses the reaction tRNA(Ser) + L-serine + ATP = L-seryl-tRNA(Ser) + AMP + diphosphate + H(+). The enzyme catalyses tRNA(Sec) + L-serine + ATP = L-seryl-tRNA(Sec) + AMP + diphosphate + H(+). The protein operates within aminoacyl-tRNA biosynthesis; selenocysteinyl-tRNA(Sec) biosynthesis; L-seryl-tRNA(Sec) from L-serine and tRNA(Sec): step 1/1. Catalyzes the attachment of serine to tRNA(Ser). Is also able to aminoacylate tRNA(Sec) with serine, to form the misacylated tRNA L-seryl-tRNA(Sec), which will be further converted into selenocysteinyl-tRNA(Sec). This chain is Serine--tRNA ligase, found in Clavibacter michiganensis subsp. michiganensis (strain NCPPB 382).